The following is a 914-amino-acid chain: Valine--tRNA ligase (914 aa).

A 'HIGH' region motif is present at residues 47-57; it reads PYPTGELHMGH. The 'KMSKS' region signature appears at 552-556; that stretch reads KMSKS. Lysine 555 contacts ATP.

The protein belongs to the class-I aminoacyl-tRNA synthetase family. ValS type 2 subfamily.

The protein resides in the cytoplasm. The enzyme catalyses tRNA(Val) + L-valine + ATP = L-valyl-tRNA(Val) + AMP + diphosphate. Functionally, catalyzes the attachment of valine to tRNA(Val). As ValRS can inadvertently accommodate and process structurally similar amino acids such as threonine, to avoid such errors, it has a 'posttransfer' editing activity that hydrolyzes mischarged Thr-tRNA(Val) in a tRNA-dependent manner. The protein is Valine--tRNA ligase of Methanopyrus kandleri (strain AV19 / DSM 6324 / JCM 9639 / NBRC 100938).